The following is a 145-amino-acid chain: Small ribosomal subunit protein eS19 (145 aa).

It belongs to the eukaryotic ribosomal protein eS19 family. Part of the 30S ribosomal subunit.

Functionally, may be involved in maturation of the 30S ribosomal subunit. The protein is Small ribosomal subunit protein eS19 of Methanothermobacter thermautotrophicus (strain ATCC 29096 / DSM 1053 / JCM 10044 / NBRC 100330 / Delta H) (Methanobacterium thermoautotrophicum).